We begin with the raw amino-acid sequence, 145 residues long: Photosystem I reaction center subunit VI-2, chloroplastic (145 aa).

A chloroplast-targeting transit peptide spans 1–50; sequence MASFATIAAVQPSAAVKGLGGSSLAGAKLFIKPSRQSFKTKSTRAGAVVA. A helical transmembrane segment spans residues 102–118; the sequence is LLLKFLILGGGSLLTYV. The tract at residues 126 to 145 is disordered; it reads VLPIKRGPQEPPKLGPRGKL.

This sequence belongs to the psaH family.

It is found in the plastid. It localises to the chloroplast thylakoid membrane. In terms of biological role, possible role could be the docking of the LHC I antenna complex to the core complex. The protein is Photosystem I reaction center subunit VI-2, chloroplastic (PSAH2) of Arabidopsis thaliana (Mouse-ear cress).